The chain runs to 207 residues: dITP/XTP pyrophosphatase (207 aa).

Residue 10-15 (TRNAGK) coordinates substrate. The Mg(2+) site is built by Glu-43 and Asp-72. Asp-72 functions as the Proton acceptor in the catalytic mechanism. Substrate-binding positions include Ser-73, 161-164 (FGYD), Lys-184, and 189-190 (HR).

It belongs to the HAM1 NTPase family. In terms of assembly, homodimer. Mg(2+) serves as cofactor.

The catalysed reaction is XTP + H2O = XMP + diphosphate + H(+). It carries out the reaction dITP + H2O = dIMP + diphosphate + H(+). It catalyses the reaction ITP + H2O = IMP + diphosphate + H(+). Pyrophosphatase that catalyzes the hydrolysis of nucleoside triphosphates to their monophosphate derivatives, with a high preference for the non-canonical purine nucleotides XTP (xanthosine triphosphate), dITP (deoxyinosine triphosphate) and ITP. Seems to function as a house-cleaning enzyme that removes non-canonical purine nucleotides from the nucleotide pool, thus preventing their incorporation into DNA/RNA and avoiding chromosomal lesions. The polypeptide is dITP/XTP pyrophosphatase (Nitratidesulfovibrio vulgaris (strain ATCC 29579 / DSM 644 / CCUG 34227 / NCIMB 8303 / VKM B-1760 / Hildenborough) (Desulfovibrio vulgaris)).